The chain runs to 304 residues: Acetyl-coenzyme A carboxylase carboxyl transferase subunit beta (304 aa).

A CoA carboxyltransferase N-terminal domain is found at 23–292; the sequence is VWTKCDSCGQ…PNPEAPREGV (270 aa). Residues Cys27, Cys30, Cys46, and Cys49 each coordinate Zn(2+). The C4-type zinc-finger motif lies at 27–49; it reads CDSCGQVLYRAELERNLEVCPKC. A disordered region spans residues 284-304; sequence NPEAPREGVVVPPVPDQEPEA. The segment covering 295-304 has biased composition (pro residues); sequence PPVPDQEPEA.

This sequence belongs to the AccD/PCCB family. As to quaternary structure, acetyl-CoA carboxylase is a heterohexamer composed of biotin carboxyl carrier protein (AccB), biotin carboxylase (AccC) and two subunits each of ACCase subunit alpha (AccA) and ACCase subunit beta (AccD). Requires Zn(2+) as cofactor.

The protein resides in the cytoplasm. It catalyses the reaction N(6)-carboxybiotinyl-L-lysyl-[protein] + acetyl-CoA = N(6)-biotinyl-L-lysyl-[protein] + malonyl-CoA. It functions in the pathway lipid metabolism; malonyl-CoA biosynthesis; malonyl-CoA from acetyl-CoA: step 1/1. In terms of biological role, component of the acetyl coenzyme A carboxylase (ACC) complex. Biotin carboxylase (BC) catalyzes the carboxylation of biotin on its carrier protein (BCCP) and then the CO(2) group is transferred by the transcarboxylase to acetyl-CoA to form malonyl-CoA. The chain is Acetyl-coenzyme A carboxylase carboxyl transferase subunit beta from Shigella flexneri serotype 5b (strain 8401).